The following is a 357-amino-acid chain: N-acetyl-gamma-glutamyl-phosphate reductase (357 aa).

Residue Cys-151 is part of the active site.

Belongs to the NAGSA dehydrogenase family. Type 1 subfamily.

The protein resides in the cytoplasm. It catalyses the reaction N-acetyl-L-glutamate 5-semialdehyde + phosphate + NADP(+) = N-acetyl-L-glutamyl 5-phosphate + NADPH + H(+). It functions in the pathway amino-acid biosynthesis; L-arginine biosynthesis; N(2)-acetyl-L-ornithine from L-glutamate: step 3/4. Its function is as follows. Catalyzes the NADPH-dependent reduction of N-acetyl-5-glutamyl phosphate to yield N-acetyl-L-glutamate 5-semialdehyde. This Corynebacterium kroppenstedtii (strain DSM 44385 / JCM 11950 / CIP 105744 / CCUG 35717) protein is N-acetyl-gamma-glutamyl-phosphate reductase.